The primary structure comprises 242 residues: Floral homeotic protein AGAMOUS (242 aa).

The MADS-box domain maps to 19-73 (RGKIEIKRIENTTNRQVTFCKRRNGLLKKAYELSVLCDAEVALIVFSSRGRLYEY). The region spanning 103-193 (AQYYQQEASK…RAKIAETERS (91 aa)) is the K-box domain.

As to expression, expressed exclusively in stamens and carpels.

It is found in the nucleus. Its function is as follows. Probable transcription factor involved in regulating genes that determines stamen and carpel development in wild-type flowers. This chain is Floral homeotic protein AGAMOUS (AG1), found in Petunia hybrida (Petunia).